The chain runs to 427 residues: MEISQPSIGIFYISKVLALAPYATVRNSKGRVEIGRSWLFTVYSATLTVVMVFLTYRGLLFDANSEIPVRMKSATSKVVTALDVSVVVMAIVSGVYCGLFSLNDTLELNDRLNKIDNTLNAYNNFRRDRWRALGMAAVSLLAISILVGLDVGTWMRIAQDMNIAQSDTELNVHWYIPFYSLYFILTGLQVNIANTAYGLGRRFGRLNRMLSSSFLAENNATSAIKPQKVSTVKNVSVNRPAMPSALHASLTKLNGETLPSEAAAKNKGLLLKSLADSHESLGKCVHLLSNSFGIAVLFILVSCLLHLVATAYFLFLELLSKRDNGYLWVQMLWICFHFLRLLMVVEPCHLAARESRKTIQIVCEIERKVHEPILAEAVKKFWQQLLVVDADFSACGLCRVNRTILTSFASAIATYLVILIQFQRTNG.

Residues 1-37 (MEISQPSIGIFYISKVLALAPYATVRNSKGRVEIGRS) lie on the Cytoplasmic side of the membrane. The chain crosses the membrane as a helical span at residues 38-63 (WLFTVYSATLTVVMVFLTYRGLLFDA). At 64–75 (NSEIPVRMKSAT) the chain is on the extracellular side. 2 residues coordinate beta-D-fructose: Arg70 and Asp83. The chain crosses the membrane as a helical span at residues 76 to 96 (SKVVTALDVSVVVMAIVSGVY). Residues 97–135 (CGLFSLNDTLELNDRLNKIDNTLNAYNNFRRDRWRALGM) lie on the Cytoplasmic side of the membrane. The helical transmembrane segment at 136–158 (AAVSLLAISILVGLDVGTWMRIA) threads the bilayer. Over 159–168 (QDMNIAQSDT) the chain is Extracellular. The helical transmembrane segment at 169–193 (ELNVHWYIPFYSLYFILTGLQVNIA) threads the bilayer. Tyr182 serves as a coordination point for beta-D-fructose. The Cytoplasmic portion of the chain corresponds to 194–293 (NTAYGLGRRF…CVHLLSNSFG (100 aa)). Residues 294 to 316 (IAVLFILVSCLLHLVATAYFLFL) traverse the membrane as a helical segment. Thr310 contacts beta-D-fructose. The Extracellular portion of the chain corresponds to 317–324 (ELLSKRDN). A helical membrane pass occupies residues 325 to 346 (GYLWVQMLWICFHFLRLLMVVE). His337 is a beta-D-fructose binding site. Topologically, residues 347-402 (PCHLAARESRKTIQIVCEIERKVHEPILAEAVKKFWQQLLVVDADFSACGLCRVNR) are cytoplasmic. The chain crosses the membrane as a helical span at residues 403–423 (TILTSFASAIATYLVILIQFQ). Gln421 serves as a coordination point for Ca(2+). Over 424–427 (RTNG) the chain is Extracellular.

Belongs to the insect chemoreceptor superfamily. Gustatory receptor (GR) family. Gr21a subfamily. Homotetramer. In terms of tissue distribution, expressed in the adult labellar chemosensory neurons and in the adult head, abdomen, leg and wing. In larvae, is expressed in taste organs, as well as the brain and the gastrointestinal system.

Its subcellular location is the cell membrane. Gustatory receptor which mediates acceptance or avoidance behavior, depending on its substrates. Gr43a is the main sugar receptor in larvae. Functions as a narrowly tuned fructose receptor in taste neurons but also as a fructose receptor in the brain. Necessary and sufficient to sense hemolymph fructose and promote feeding in hungry flies but suppress feeding in satiated flies. This Drosophila melanogaster (Fruit fly) protein is Gustatory receptor for sugar taste 43a (Gr43a).